Reading from the N-terminus, the 292-residue chain is uncharacterized protein (292 aa).

A helical transmembrane segment spans residues 13 to 35; sequence LFILFIIVVCIYLLPRVAINAFY.

This sequence belongs to the serine esterase family.

The protein localises to the membrane. This is an uncharacterized protein from Salmonella typhi.